Consider the following 294-residue polypeptide: MSRIEALPTHIKAQVLAEALPWLKQLHGKVVVVKYGGNAMTDDTLRRAFAADMAFLRNCGIHPVVVHGGGPQITAMLRRLGIEGDFKGGFRVTTPEVLDVARMVLFGQVGRELVNLINAHGPYAVGITGEDAQLFTAVRRSVTVDGVATDIGLVGDVDQVNTAAMLDLVAAGRIPVVSTLAPDADGVVHNINADTAAAAVAEALGAEKLLMLTDIDGLYTRWPDRDSLVSEIDTGTLAQLLPTLELGMVPKVEACLRAVIGGVPSAHIIDGRVTHCVLVELFTDAGTGTKVVRG.

Substrate contacts are provided by residues 69–70 (GG), Arg-91, and Asn-190.

Belongs to the acetylglutamate kinase family. ArgB subfamily.

It localises to the cytoplasm. The enzyme catalyses N-acetyl-L-glutamate + ATP = N-acetyl-L-glutamyl 5-phosphate + ADP. It functions in the pathway amino-acid biosynthesis; L-arginine biosynthesis; N(2)-acetyl-L-ornithine from L-glutamate: step 2/4. Its function is as follows. Catalyzes the ATP-dependent phosphorylation of N-acetyl-L-glutamate. The sequence is that of Acetylglutamate kinase from Mycobacterium tuberculosis (strain CDC 1551 / Oshkosh).